Consider the following 735-residue polypeptide: Protostadienol synthase helA (735 aa).

The PFTB 1 repeat unit spans residues Lys132–Gly173. Asp463 functions as the Proton donor in the catalytic mechanism. PFTB repeat units lie at residues Leu490 to Val531, Leu567 to Gly607, and Cys616 to Gly663.

This sequence belongs to the terpene cyclase/mutase family.

It carries out the reaction (S)-2,3-epoxysqualene = (17Z)-protosta-17(20),24-dien-3beta-ol. The protein operates within mycotoxin biosynthesis. Functionally, protostadienol synthase; part of the gene cluster that mediates the biosynthesis of helvolic acid, an antibacterial nortriterpenoid. Protostadienol synthase helA cyclizes (3S)-oxidosqualene to (17Z)-protosta-17(20),24-dien-3-beta-ol (protostadienol). The synthesis of protostadienol is followed by several steps of monooxygenation, dehydrogenation, and acyl transfer to yield the final helvolic acid. Following the cyclization to the tetracyclic protostadienol by helA, cytochrome P450 monooxygenases helB1-mediated and helB2-mediated oxidation at C-4 and C-16, acyltransferase helD2-dependent acetylation of 16-OH, oxidation of C-21 by cytochrome P450 monooxygenase helB4, and short chain dehydrogenase helC-dependent oxidative decarboxylation yield the fusidane skeleton. This intermediate is further modified in three additional steps mediated by the cytochrome P450 monooxygenase helB3, the acyltransferase helD1, and the 3-ketosteroid 1-dehydrogenase helE to give helvolic acid. Compared with the late stages in the biosynthesis of helvolic acid, enzymes involved in the early stage modifications act in a relatively strict order. The hydroxylation of C-16 by helB1 and subsequent acetylation by helD2 should occur before the helB3-mediated oxidation of C-21. C-4 demethylation in fusidane-type antibiotics proceeds in an unusual manner though it is also achieved by oxidative decarboxylation. The methyl group at C-4 beta position is oxidized by helB1 and subsequently removed by the short chain dehydrogenase helC. In Aspergillus fumigatus (strain ATCC MYA-4609 / CBS 101355 / FGSC A1100 / Af293) (Neosartorya fumigata), this protein is Protostadienol synthase helA.